The following is a 283-amino-acid chain: Diaminopimelate epimerase (283 aa).

Asn-13 and Asn-66 together coordinate substrate. Residue Cys-75 is the Proton donor of the active site. Substrate is bound by residues 76 to 77 (GN), Asn-165, Asn-198, and 216 to 217 (ER). Cys-225 functions as the Proton acceptor in the catalytic mechanism. Residue 226–227 (GT) coordinates substrate.

This sequence belongs to the diaminopimelate epimerase family. In terms of assembly, homodimer.

Its subcellular location is the cytoplasm. The catalysed reaction is (2S,6S)-2,6-diaminopimelate = meso-2,6-diaminopimelate. It functions in the pathway amino-acid biosynthesis; L-lysine biosynthesis via DAP pathway; DL-2,6-diaminopimelate from LL-2,6-diaminopimelate: step 1/1. Its function is as follows. Catalyzes the stereoinversion of LL-2,6-diaminopimelate (L,L-DAP) to meso-diaminopimelate (meso-DAP), a precursor of L-lysine and an essential component of the bacterial peptidoglycan. This chain is Diaminopimelate epimerase, found in Acaryochloris marina (strain MBIC 11017).